Here is a 140-residue protein sequence, read N- to C-terminus: Arsenate-mycothiol transferase ArsC1 (140 aa).

Belongs to the low molecular weight phosphotyrosine protein phosphatase family.

The protein localises to the cytoplasm. The catalysed reaction is mycothiol + arsenate = arseno-mycothiol + H2O. Functionally, involved in defense against toxic arsenate. Involved in the mycothiol/myoredoxin redox pathway which uses a mycothioltransferase mechanism; facilitates adduct formation between arsenate and mycothiol. The sequence is that of Arsenate-mycothiol transferase ArsC1 (arsC1) from Corynebacterium glutamicum (strain ATCC 13032 / K051).